Reading from the N-terminus, the 310-residue chain is Putative S-adenosyl-L-methionine-dependent methyltransferase MAP_2076c (310 aa).

S-adenosyl-L-methionine is bound by residues D131 and 160–161 (DL).

The protein belongs to the UPF0677 family.

Functionally, exhibits S-adenosyl-L-methionine-dependent methyltransferase activity. In Mycolicibacterium paratuberculosis (strain ATCC BAA-968 / K-10) (Mycobacterium paratuberculosis), this protein is Putative S-adenosyl-L-methionine-dependent methyltransferase MAP_2076c.